The following is a 381-amino-acid chain: Creatine kinase B-type (381 aa).

Residue Ser4 is modified to Phosphoserine. The 88-residue stretch at 11–98 folds into the Phosphagen kinase N-terminal domain; it reads KLRFPAEDEF…FDPIIEDRHG (88 aa). Thr35 carries the phosphothreonine modification. A Glycyl lysine isopeptide (Lys-Gly) (interchain with G-Cter in ubiquitin) cross-link involves residue Lys45. Val72 is a binding site for creatine. The span at 96 to 110 shows a compositional bias: basic and acidic residues; the sequence is RHGGYKPSDEHKTDL. A disordered region spans residues 96 to 123; the sequence is RHGGYKPSDEHKTDLNPDNLQGGDDLDP. Residues Lys101 and Lys107 each participate in a glycyl lysine isopeptide (Lys-Gly) (interchain with G-Cter in ubiquitin) cross-link. Tyr125 is subject to Phosphotyrosine. The Phosphagen kinase C-terminal domain occupies 125–367; sequence YVLSSRVRTG…KLLIEMEQRL (243 aa). Residues 128 to 132, Arg130, Arg132, and His191 each bind ATP; that span reads SSRVR. Positions 130–138 are internal MTS-like signal; sequence RVRTGRSIR. The residue at position 199 (Ser199) is a Phosphoserine. Glu232 provides a ligand contact to creatine. Arg236 contacts ATP. Tyr269 carries the 3'-nitrotyrosine modification. Position 285 (Ser285) interacts with creatine. ATP-binding positions include Arg292, Arg320, 320–325, and Asp335; that span reads RGTGGV. At Thr322 the chain carries Phosphothreonine. Lys381 is covalently cross-linked (Glycyl lysine isopeptide (Lys-Gly) (interchain with G-Cter in ubiquitin)).

This sequence belongs to the ATP:guanido phosphotransferase family. Dimer of identical or non-identical chains, which can be either B (brain type) or M (muscle type). With MM being the major form in skeletal muscle and myocardium, MB existing in myocardium, and BB existing in many tissues, especially brain. Interacts with SLC12A6 (via C-terminus); the interaction may be required for SLC12A6 potassium-chloride cotransport activity. Ubiquitinated by the ECS(ASB9) complex, leading to its degradation by the proteasome.

It is found in the cytoplasm. The protein localises to the cytosol. The protein resides in the mitochondrion. It localises to the cell membrane. It carries out the reaction creatine + ATP = N-phosphocreatine + ADP + H(+). Its function is as follows. Reversibly catalyzes the transfer of phosphate between ATP and various phosphogens (e.g. creatine phosphate). Creatine kinase isoenzymes play a central role in energy transduction in tissues with large, fluctuating energy demands, such as skeletal muscle, heart, brain and spermatozoa. Acts as a key regulator of adaptive thermogenesis as part of the futile creatine cycle: localizes to the mitochondria of thermogenic fat cells and acts by mediating phosphorylation of creatine to initiate a futile cycle of creatine phosphorylation and dephosphorylation. During the futile creatine cycle, creatine and N-phosphocreatine are in a futile cycle, which dissipates the high energy charge of N-phosphocreatine as heat without performing any mechanical or chemical work. This is Creatine kinase B-type (CKB) from Canis lupus familiaris (Dog).